We begin with the raw amino-acid sequence, 241 residues long: Uridylate kinase (241 aa).

Position 12–15 (12–15) interacts with ATP; the sequence is KLSG. Glycine 54 is a UMP binding site. Glycine 55 and arginine 59 together coordinate ATP. UMP is bound by residues aspartate 74 and 135 to 142; that span reads VGAPYFTT. ATP is bound by residues threonine 162, tyrosine 168, and aspartate 171.

Belongs to the UMP kinase family. Homohexamer.

Its subcellular location is the cytoplasm. The enzyme catalyses UMP + ATP = UDP + ADP. It participates in pyrimidine metabolism; CTP biosynthesis via de novo pathway; UDP from UMP (UMPK route): step 1/1. With respect to regulation, inhibited by UTP. Functionally, catalyzes the reversible phosphorylation of UMP to UDP. The sequence is that of Uridylate kinase from Sphingopyxis alaskensis (strain DSM 13593 / LMG 18877 / RB2256) (Sphingomonas alaskensis).